The chain runs to 636 residues: Plasma kallikrein (636 aa).

The first 19 residues, 1-19, serve as a signal peptide directing secretion; that stretch reads MIALRQAAYFICLFATVSC. 4 consecutive Apple domains span residues 21-104, 111-194, 201-284, and 294-377; these read CLTQ…LKRC, CHRS…LKAC, CRVD…LLTC, and CHSK…LRLC. Disulfide bonds link cysteine 21-cysteine 104, cysteine 47-cysteine 77, cysteine 51-cysteine 57, cysteine 111-cysteine 194, cysteine 137-cysteine 166, cysteine 141-cysteine 147, cysteine 201-cysteine 284, cysteine 227-cysteine 256, cysteine 231-cysteine 237, cysteine 294-cysteine 377, cysteine 320-cysteine 349, and cysteine 324-cysteine 330. N-linked (GlcNAc...) asparagine glycans are attached at residues asparagine 66 and asparagine 127. N-linked (GlcNAc...) asparagine glycans are attached at residues asparagine 361 and asparagine 397. Residues 392–627 form the Peptidase S1 domain; it reads IVGGTNASWG…YVDWILEKTQ (236 aa). Cysteine 420 and cysteine 436 are oxidised to a cystine. The active-site Charge relay system is histidine 435. N-linked (GlcNAc...) asparagine glycosylation occurs at asparagine 454. Aspartate 484 serves as the catalytic Charge relay system. Residue asparagine 495 is glycosylated (N-linked (GlcNAc...) asparagine). 3 cysteine pairs are disulfide-bonded: cysteine 518–cysteine 585, cysteine 549–cysteine 564, and cysteine 575–cysteine 603. The Charge relay system role is filled by serine 579.

This sequence belongs to the peptidase S1 family. Plasma kallikrein subfamily. As to quaternary structure, forms a heterodimer with SERPINA5. The zymogen is activated by factor XIIa, which cleaves the molecule into a light chain, which contains the active site, and a heavy chain, which associates with HMW kininogen. These chains are linked by one or more disulfide bonds.

Its subcellular location is the secreted. It carries out the reaction Cleaves selectively Arg-|-Xaa and Lys-|-Xaa bonds, including Lys-|-Arg and Arg-|-Ser bonds in (human) kininogen to release bradykinin.. Inhibited by SERPINA5. In terms of biological role, the enzyme cleaves Lys-Arg and Arg-Ser bonds. It activates, in a reciprocal reaction, factor XII after its binding to a negatively charged surface. It also releases bradykinin from HMW kininogen and may also play a role in the renin-angiotensin system by converting prorenin into renin. In Bos taurus (Bovine), this protein is Plasma kallikrein (KLKB1).